The following is an 813-amino-acid chain: Leucine--tRNA ligase (813 aa).

The 'HIGH' region motif lies at 39 to 49 (PYPSGRIHMGH). The short motif at 582–586 (KMSKS) is the 'KMSKS' region element. ATP is bound at residue Lys585.

The protein belongs to the class-I aminoacyl-tRNA synthetase family.

It localises to the cytoplasm. The catalysed reaction is tRNA(Leu) + L-leucine + ATP = L-leucyl-tRNA(Leu) + AMP + diphosphate. In Campylobacter hominis (strain ATCC BAA-381 / DSM 21671 / CCUG 45161 / LMG 19568 / NCTC 13146 / CH001A), this protein is Leucine--tRNA ligase.